Here is a 67-residue protein sequence, read N- to C-terminus: Ranatuerin-2Vb (67 aa).

The N-terminal stretch at 1–22 (MFTLKKSFLLLFFLGTITLSLC) is a signal peptide. Residues 23–39 (EEERGADDDDGEEEVKR) constitute a propeptide that is removed on maturation. The cysteines at positions 62 and 67 are disulfide-linked.

In terms of tissue distribution, expressed by the skin glands.

The protein localises to the secreted. In terms of biological role, antimicrobial peptide. This is Ranatuerin-2Vb from Odorrana versabilis (Chinese bamboo leaf odorous frog).